Here is a 298-residue protein sequence, read N- to C-terminus: UTP--glucose-1-phosphate uridylyltransferase (298 aa).

It belongs to the UDPGP type 2 family.

It catalyses the reaction alpha-D-glucose 1-phosphate + UTP + H(+) = UDP-alpha-D-glucose + diphosphate. It functions in the pathway carbohydrate metabolism; nucleotide-sugar metabolism. Its pathway is capsule biogenesis; capsule polysaccharide biosynthesis. In Klebsiella pneumoniae, this protein is UTP--glucose-1-phosphate uridylyltransferase (galF).